The chain runs to 437 residues: Xylose isomerase (437 aa).

Catalysis depends on residues His102 and Asp105. Positions 233, 269, 272, 297, 308, 310, and 340 each coordinate Mg(2+).

Belongs to the xylose isomerase family. In terms of assembly, homotetramer. It depends on Mg(2+) as a cofactor.

It localises to the cytoplasm. It carries out the reaction alpha-D-xylose = alpha-D-xylulofuranose. The sequence is that of Xylose isomerase from Novosphingobium aromaticivorans (strain ATCC 700278 / DSM 12444 / CCUG 56034 / CIP 105152 / NBRC 16084 / F199).